Consider the following 60-residue polypeptide: RDNTTCDGPCGIRFRQNRXXXXRIIGGQDAAHGSWPWMVSLQIFTYHNNRRYHVCGGSLL.

N3 carries N-linked (GlcNAc...) asparagine glycosylation. Residues 24–60 (IIGGQDAAHGSWPWMVSLQIFTYHNNRRYHVCGGSLL) form the Peptidase S1 domain.

This sequence belongs to the peptidase S1 family. Heavy chain (catalytic) and a light chain linked by two disulfide bonds. Forms a heterodimer with SERPINA5.

The catalysed reaction is Preferential cleavage: Arg-|-Xaa, Lys-|-Xaa.. Inhibited by SERPINA5. In terms of biological role, acrosin is the major protease of mammalian spermatozoa. It is a serine protease of trypsin-like cleavage specificity, it is synthesized in a zymogen form, proacrosin and stored in the acrosome. This Capra hircus (Goat) protein is Acrosin (ACR).